A 208-amino-acid polypeptide reads, in one-letter code: Small ribosomal subunit protein eS1 (208 aa).

Belongs to the eukaryotic ribosomal protein eS1 family.

This Saccharolobus solfataricus (strain ATCC 35092 / DSM 1617 / JCM 11322 / P2) (Sulfolobus solfataricus) protein is Small ribosomal subunit protein eS1.